Reading from the N-terminus, the 957-residue chain is Glycine dehydrogenase (decarboxylating) (957 aa).

The residue at position 708 (Lys-708) is an N6-(pyridoxal phosphate)lysine.

Belongs to the GcvP family. The glycine cleavage system is composed of four proteins: P, T, L and H. It depends on pyridoxal 5'-phosphate as a cofactor.

The catalysed reaction is N(6)-[(R)-lipoyl]-L-lysyl-[glycine-cleavage complex H protein] + glycine + H(+) = N(6)-[(R)-S(8)-aminomethyldihydrolipoyl]-L-lysyl-[glycine-cleavage complex H protein] + CO2. The glycine cleavage system catalyzes the degradation of glycine. The P protein binds the alpha-amino group of glycine through its pyridoxal phosphate cofactor; CO(2) is released and the remaining methylamine moiety is then transferred to the lipoamide cofactor of the H protein. The chain is Glycine dehydrogenase (decarboxylating) from Shigella sonnei (strain Ss046).